A 699-amino-acid polypeptide reads, in one-letter code: TPR repeat-containing thioredoxin TTL1 (699 aa).

Residues 1-211 (MPKSVKPISE…SSSRSSSTVA (211 aa)) are disordered. Residues 9 to 20 (SESDKLSDHLRD) show a composition bias toward basic and acidic residues. Phosphoserine is present on residues Ser-39 and Ser-42. Composition is skewed to low complexity over residues 52–70 (TTTT…SSGS) and 83–135 (RSNS…TSPA). The segment covering 166-182 (SGTGTYGHGSIMRGGGI) has biased composition (gly residues). Low complexity predominate over residues 195-210 (NSPVNVGSSSRSSSTV). TPR repeat units follow at residues 227–260 (SEEV…SPTN), 262–294 (AYRS…DPNY), 296–328 (RAHH…SDPM), 419–452 (AYIY…DPRC), 465–498 (VARA…DPCN), 499–532 (AILY…QPSY), and 534–566 (KPLL…LPHD). The region spanning 605–691 (QFKSAMNLPG…IVCPSKEVLE (87 aa)) is the Thioredoxin domain.

Expressed in the root elongation zone, stele, root cap, embryo vascular system, leaf axilar buds, silique abscission zone and guard cells.

In terms of biological role, involved in responses to osmotic stress and abscisic acid (ABA). May act as a positive regulator of ABA signaling during germination and seedling development under stress. This Arabidopsis thaliana (Mouse-ear cress) protein is TPR repeat-containing thioredoxin TTL1 (TTL1).